Reading from the N-terminus, the 342-residue chain is Nuclear hormone receptor family member nhr-150 (342 aa).

Residues 1-71 (MCQVCGAAEA…AGMTSKKIQS (71 aa)) constitute a DNA-binding region (nuclear receptor). An NR C4-type zinc finger spans residues 2–22 (CQVCGAAEADLHFGGISCRAC). The NR C4-type; degenerate zinc finger occupies 39-54 (CTCKTRILDSHPCRSC). The NR LBD domain occupies 94–341 (SARIIPRSSL…GFMEIIRESK (248 aa)).

It belongs to the nuclear hormone receptor family.

The protein localises to the nucleus. Its function is as follows. Orphan nuclear receptor. This is Nuclear hormone receptor family member nhr-150 (nhr-150) from Caenorhabditis elegans.